A 365-amino-acid chain; its full sequence is N5-carboxyaminoimidazole ribonucleotide synthase (365 aa).

Residues arginine 93, lysine 132, 137–143 (GYDGKGQ), 168–171 (EEFV), glutamate 176, histidine 199, and 249–250 (NE) each bind ATP. Positions 97 to 279 (KLFLKKHGFP…QFENLLRAIT (183 aa)) constitute an ATP-grasp domain.

The protein belongs to the PurK/PurT family. In terms of assembly, homodimer.

It carries out the reaction 5-amino-1-(5-phospho-beta-D-ribosyl)imidazole + hydrogencarbonate + ATP = 5-carboxyamino-1-(5-phospho-D-ribosyl)imidazole + ADP + phosphate + 2 H(+). The protein operates within purine metabolism; IMP biosynthesis via de novo pathway; 5-amino-1-(5-phospho-D-ribosyl)imidazole-4-carboxylate from 5-amino-1-(5-phospho-D-ribosyl)imidazole (N5-CAIR route): step 1/2. Its function is as follows. Catalyzes the ATP-dependent conversion of 5-aminoimidazole ribonucleotide (AIR) and HCO(3)(-) to N5-carboxyaminoimidazole ribonucleotide (N5-CAIR). The sequence is that of N5-carboxyaminoimidazole ribonucleotide synthase from Aquifex aeolicus (strain VF5).